We begin with the raw amino-acid sequence, 381 residues long: Cytochrome b (381 aa).

The next 4 membrane-spanning stretches (helical) occupy residues 34–54 (FGSLLATCLALQIITGIFLAM), 78–99 (WLIRNMHANGASLFFMCIYLHI), 114–134 (WNTGIILLLLVMATAFVGYVL), and 179–199 (FFTFHFLLPFAITGLTAVHLL). Heme b-binding residues include histidine 84 and histidine 98. Heme b is bound by residues histidine 183 and histidine 197. Histidine 202 contributes to the a ubiquinone binding site. The next 4 membrane-spanning stretches (helical) occupy residues 227–247 (YKDLLGLILMLTFLLTLTLFS), 289–309 (LGGVLALLFSILILFLMPTLH), 321–341 (LTQILFWSLVADLLVLTWIGG), and 348–368 (FIIIGQVASTFYFLILLLLMP).

This sequence belongs to the cytochrome b family. In terms of assembly, the cytochrome bc1 complex contains 3 respiratory subunits (MT-CYB, CYC1 and UQCRFS1), 2 core proteins (UQCRC1 and UQCRC2) and probably 6 low-molecular weight proteins. Heme b serves as cofactor.

The protein resides in the mitochondrion inner membrane. Functionally, component of the ubiquinol-cytochrome c reductase complex (complex III or cytochrome b-c1 complex) that is part of the mitochondrial respiratory chain. The b-c1 complex mediates electron transfer from ubiquinol to cytochrome c. Contributes to the generation of a proton gradient across the mitochondrial membrane that is then used for ATP synthesis. This chain is Cytochrome b (MT-CYB), found in Chelonia mydas (Green sea-turtle).